The following is a 201-amino-acid chain: Adenylyl-sulfate kinase (201 aa).

35-42 (GLSGSGKS) is a binding site for ATP. The Phosphoserine intermediate role is filled by serine 109.

The protein belongs to the APS kinase family.

The enzyme catalyses adenosine 5'-phosphosulfate + ATP = 3'-phosphoadenylyl sulfate + ADP + H(+). The protein operates within sulfur metabolism; hydrogen sulfide biosynthesis; sulfite from sulfate: step 2/3. Its function is as follows. Catalyzes the synthesis of activated sulfate. The protein is Adenylyl-sulfate kinase of Shigella flexneri.